Reading from the N-terminus, the 331-residue chain is Phosphoenolpyruvate transferase (331 aa).

D63 serves as a coordination point for 7,8-didemethyl-8-hydroxy-5-deazariboflavin.

The protein belongs to the CofD family. Homodimer. Mg(2+) serves as cofactor.

The enzyme catalyses enolpyruvoyl-2-diphospho-5'-guanosine + 7,8-didemethyl-8-hydroxy-5-deazariboflavin = dehydro coenzyme F420-0 + GMP + H(+). The protein operates within cofactor biosynthesis; coenzyme F420 biosynthesis. Its function is as follows. Catalyzes the transfer of the phosphoenolpyruvate moiety from enoylpyruvoyl-2-diphospho-5'-guanosine (EPPG) to 7,8-didemethyl-8-hydroxy-5-deazariboflavin (FO) with the formation of dehydro coenzyme F420-0 and GMP. The protein is Phosphoenolpyruvate transferase of Mycobacterium bovis (strain ATCC BAA-935 / AF2122/97).